The chain runs to 230 residues: Large ribosomal subunit protein uL1 (230 aa).

It belongs to the universal ribosomal protein uL1 family. Part of the 50S ribosomal subunit.

Binds directly to 23S rRNA. The L1 stalk is quite mobile in the ribosome, and is involved in E site tRNA release. In terms of biological role, protein L1 is also a translational repressor protein, it controls the translation of the L11 operon by binding to its mRNA. The sequence is that of Large ribosomal subunit protein uL1 from Bradyrhizobium sp. (strain BTAi1 / ATCC BAA-1182).